The primary structure comprises 132 residues: Large-conductance mechanosensitive channel (132 aa).

Transmembrane regions (helical) follow at residues 14–34 (VVDLAVGVVIGAAFGKIVSSL), 38–58 (IITPLLGMVLGGVDFTSLHFG), and 67–87 (GNFIQTIFDFLIIAASIFMFV).

This sequence belongs to the MscL family. In terms of assembly, homopentamer.

Its subcellular location is the cell membrane. Functionally, channel that opens in response to stretch forces in the membrane lipid bilayer. May participate in the regulation of osmotic pressure changes within the cell. The polypeptide is Large-conductance mechanosensitive channel (Bacillus cereus (strain ATCC 10987 / NRS 248)).